A 132-amino-acid chain; its full sequence is Ribonuclease VapC (132 aa).

Positions 4-123 (YMLDTNIVIY…SNNLREFERV (120 aa)) constitute a PINc domain. Mg(2+) contacts are provided by Asp7 and Asp98.

The protein belongs to the PINc/VapC protein family. As to quaternary structure, probably forms a complex with cognate antitoxin VapB2. Mg(2+) is required as a cofactor.

In terms of biological role, toxic component of a type II toxin-antitoxin (TA) system. Acts as an RNase. Its toxic effect is neutralized by cognate antitoxin VapB2 but not by non-cognate antitoxin VapB1. The chain is Ribonuclease VapC from Haemophilus influenzae (strain 86-028NP).